The sequence spans 2367 residues: Probable G-protein coupled receptor 179 (2367 aa).

Residues 1-25 form the signal peptide; that stretch reads MGTRGAVMPPPMWGLLGCCFVCAWA. The Extracellular portion of the chain corresponds to 26–381; that stretch reads LGGPRPIRSL…CLVEEAAVLR (356 aa). The tract at residues 62-245 is cache-like region; sequence YLYSGDAQQL…CQEGRLRPGW (184 aa). An N-linked (GlcNAc...) asparagine glycan is attached at N75. C76 and C236 form a disulfide bridge. The N-linked (GlcNAc...) asparagine glycan is linked to N298. Residues 382–402 form a helical membrane-spanning segment; the sequence is AAVLACQACCMLAIFLSMLVS. Topologically, residues 403 to 415 are cytoplasmic; that stretch reads YRCRRNKRIWASG. A helical transmembrane segment spans residues 416–436; that stretch reads VVLLETVLFGFLLLYFPVFIL. The Extracellular portion of the chain corresponds to 437-444; sequence YFKPSVFR. A helical transmembrane segment spans residues 445–465; that stretch reads CIALRWVRLLGFAIVYGTIIL. A disulfide bond links C445 and C537. The Cytoplasmic portion of the chain corresponds to 466 to 493; that stretch reads KLYRVLQLFLSRTAQRSALLSSGRLLRR. A helical transmembrane segment spans residues 494 to 514; the sequence is LGLLLLPVLGFLAVWTVGALE. The Extracellular segment spans residues 515 to 543; sequence RGIQHAPLVIRGHTPSGRHFYLCHHDRWD. Residues 544-564 form a helical membrane-spanning segment; sequence YIMVVAELLLLCWGSFLCYAT. Residues 565–575 are Cytoplasmic-facing; the sequence is RAVLSAFHEPR. The chain crosses the membrane as a helical span at residues 576–594; that stretch reads YMGIALHNELLLSAAFHTA. Over 595-607 the chain is Extracellular; that stretch reads RFVLVPSLHPDWT. Residues 608-628 traverse the membrane as a helical segment; that stretch reads LLLFFFHTHSTVTTTLALIFI. At 629–2367 the chain is on the cytoplasmic side; it reads PKFWKLGAPP…PPTVYPWDWE (1739 aa). Disordered regions lie at residues 731 to 818, 869 to 932, 1039 to 1083, 1098 to 1198, 1247 to 1431, 1537 to 1557, 1577 to 1672, 1723 to 1757, 1823 to 1852, 1886 to 2108, 2133 to 2212, and 2308 to 2367; these read ARQH…FRSA, REER…PHPP, KSRA…QQGS, RSTY…AGKT, EVTE…CPWE, PRESTVPGHSSPCLDNSSSKA, DLRP…ERPQ, AIRKSPNDTGKVSADLGPRERAVTAPEKPQKPTPE, SEGTTGKGLDQKAGSESAEQREKALEKGRL, AQAP…GSVE, WEAG…KEAG, and GVRE…WDWE. Residues 738 to 759 are compositionally biased toward low complexity; sequence SGSPGHGSLPGSSRRRLLSSSL. Residues 773-782 show a composition bias toward basic and acidic residues; it reads STYDQRREQD. Basic and acidic residues predominate over residues 1039-1067; that stretch reads KSRAGENEMDAEDAHHQREANDVDEDRPK. Residues 1153–1164 show a composition bias toward polar residues; the sequence is LQNQQNAHTSRM. Basic and acidic residues-rich tracts occupy residues 1171–1181, 1277–1299, 1341–1362, and 1390–1407; these read EGSREQEDRGR, RALRQDPGDSQKKRGEARGKSEP, GRIRDKSEAGDSVEARKVEKPG, and EDGKPAQEAVKDLPQEKQ. A compositionally biased stretch (basic and acidic residues) spans 1615-1639; sequence ESQKDKEKMPGKSEIEDVTAWEKPE. Basic and acidic residues-rich tracts occupy residues 1840-1851, 1903-1920, 1970-1979, 2023-2054, 2061-2070, and 2165-2180; these read AEQREKALEKGR, AEGHSLEATEKGDLRQDP, SHLDRQRPDQ, VTERIPVKGVSRQDGKGDSQEEKGRAPEKSEP, KKPEMADFRQ, and TEEHFSKAAAKPREQE. Residues 2326–2340 are compositionally biased toward low complexity; that stretch reads PEPSLQEAESQSSSL.

Belongs to the G-protein coupled receptor 3 family. Homodimer. Associates with the R7 group RGS-GNB5 complexes, composed of an R7 group RGS subunit (RGS6, RGS7, RGS9 or RGS11) and GNB5, promoting their localization to the cell membrane and regulating the GTPase activator activity of R7 RGS proteins. Interacts with TRPM1. Interacts with GRM6. Interacts with EGFLAM; transsynaptic interaction is required for synaptic organization of photoreceptor cells. Expressed in the retina.

The protein resides in the cell membrane. Its subcellular location is the postsynaptic cell membrane. It is found in the cell projection. The protein localises to the dendrite. Functionally, orphan receptor involved in vision. Required for signal transduction through retinal depolarizing bipolar cells. Acts as an atypical G-protein coupled receptor that recruits and regulates the R7 group RGS-GNB5 complexes instead of activating G proteins: promotes the GTPase activator activity of R7 RGS proteins, increasing the GTPase activity of G protein alpha subunits, thereby driving them into their inactive GDP-bound form. Associates with components of metabotropic signaling cascade in retina ON-bipolar neurons, such as TRPM1 and GRM6: may control the ability of the GRM6 cascade to gate TRPM1. In Homo sapiens (Human), this protein is Probable G-protein coupled receptor 179.